The primary structure comprises 442 residues: MRLSRYFLPILKENPKEAEIVSHRLMLRSGMIRQQSAGIYSWLPIGLKVLNKVCTIIREEQNRAGANEILMPTIQSADLWRESGRYDAYGKEMLRIQDRQEREMLFGPTNEEMVTDIFRSYVRSYKDLPLNLYHIQWKFRDEVRPRFGVMRSREFLMKDAYSFDLDYEGAKMAYYRMFVSYLRTFARVGLQAIPMRADTGPIGGDLSHEFIILAETGESQVYCDRAYLDLAVPGADTDFRNDAQLTDIVTRWTTPYAATDEMHDEADWAKVKPESQVSARGIEVGHIFHFGTKYSEPMGAKVQGPDGKEHLVSMGSYGIGPSRLVAAAIEASHDDAGIIWPKAIAPFGAGIVNMKPGDEGCDGVSEKLYEALTNAGVDPLLDDKDERPGAKFATMDLIGLPTQVIVGPRGVAAGEVEVKDRKMGERQSLGIEAAINMLTAQA.

The protein belongs to the class-II aminoacyl-tRNA synthetase family. ProS type 2 subfamily. As to quaternary structure, homodimer.

It is found in the cytoplasm. It carries out the reaction tRNA(Pro) + L-proline + ATP = L-prolyl-tRNA(Pro) + AMP + diphosphate. Functionally, catalyzes the attachment of proline to tRNA(Pro) in a two-step reaction: proline is first activated by ATP to form Pro-AMP and then transferred to the acceptor end of tRNA(Pro). This chain is Proline--tRNA ligase, found in Brucella canis (strain ATCC 23365 / NCTC 10854 / RM-666).